Consider the following 585-residue polypeptide: Proline--tRNA ligase (585 aa).

It belongs to the class-II aminoacyl-tRNA synthetase family. ProS type 1 subfamily. In terms of assembly, homodimer.

Its subcellular location is the cytoplasm. The enzyme catalyses tRNA(Pro) + L-proline + ATP = L-prolyl-tRNA(Pro) + AMP + diphosphate. Catalyzes the attachment of proline to tRNA(Pro) in a two-step reaction: proline is first activated by ATP to form Pro-AMP and then transferred to the acceptor end of tRNA(Pro). As ProRS can inadvertently accommodate and process non-cognate amino acids such as alanine and cysteine, to avoid such errors it has two additional distinct editing activities against alanine. One activity is designated as 'pretransfer' editing and involves the tRNA(Pro)-independent hydrolysis of activated Ala-AMP. The other activity is designated 'posttransfer' editing and involves deacylation of mischarged Ala-tRNA(Pro). The misacylated Cys-tRNA(Pro) is not edited by ProRS. The sequence is that of Proline--tRNA ligase from Acidobacterium capsulatum (strain ATCC 51196 / DSM 11244 / BCRC 80197 / JCM 7670 / NBRC 15755 / NCIMB 13165 / 161).